The following is a 363-amino-acid chain: dTDP-3-amino-3,6-dideoxy-alpha-D-galactopyranose transaminase (363 aa).

Lysine 185 carries the N6-(pyridoxal phosphate)lysine modification.

Belongs to the DegT/DnrJ/EryC1 family. The cofactor is pyridoxal 5'-phosphate.

The enzyme catalyses dTDP-3-amino-3,6-dideoxy-alpha-D-galactopyranose + 2-oxoglutarate = dTDP-3-dehydro-6-deoxy-alpha-D-galactose + L-glutamate. In terms of biological role, specifically aminates dTDP-6-deoxy-D-xylohex-3-ulose to form dTDP-D-Fucp3N in the biosynthesis of dTDP-3-acetamido-3,6-dideoxy-alpha-D-galactose, a glycan chain of the S-layer. The sequence is that of dTDP-3-amino-3,6-dideoxy-alpha-D-galactopyranose transaminase (fdtB) from Aneurinibacillus thermoaerophilus.